Reading from the N-terminus, the 487-residue chain is UDP-N-acetylmuramate--L-alanine ligase (487 aa).

ATP is bound at residue 130-136 (GTHGKTT).

Belongs to the MurCDEF family.

The protein resides in the cytoplasm. It catalyses the reaction UDP-N-acetyl-alpha-D-muramate + L-alanine + ATP = UDP-N-acetyl-alpha-D-muramoyl-L-alanine + ADP + phosphate + H(+). It participates in cell wall biogenesis; peptidoglycan biosynthesis. Functionally, cell wall formation. This chain is UDP-N-acetylmuramate--L-alanine ligase, found in Photobacterium profundum (strain SS9).